The sequence spans 351 residues: UDP-N-acetylglucosamine--N-acetylmuramyl-(pentapeptide) pyrophosphoryl-undecaprenol N-acetylglucosamine transferase (351 aa).

UDP-N-acetyl-alpha-D-glucosamine-binding positions include 11–13 (TGG), Asn120, Arg161, Ser187, and Gln281.

Belongs to the glycosyltransferase 28 family. MurG subfamily.

The protein localises to the cell inner membrane. The enzyme catalyses di-trans,octa-cis-undecaprenyl diphospho-N-acetyl-alpha-D-muramoyl-L-alanyl-D-glutamyl-meso-2,6-diaminopimeloyl-D-alanyl-D-alanine + UDP-N-acetyl-alpha-D-glucosamine = di-trans,octa-cis-undecaprenyl diphospho-[N-acetyl-alpha-D-glucosaminyl-(1-&gt;4)]-N-acetyl-alpha-D-muramoyl-L-alanyl-D-glutamyl-meso-2,6-diaminopimeloyl-D-alanyl-D-alanine + UDP + H(+). The protein operates within cell wall biogenesis; peptidoglycan biosynthesis. Functionally, cell wall formation. Catalyzes the transfer of a GlcNAc subunit on undecaprenyl-pyrophosphoryl-MurNAc-pentapeptide (lipid intermediate I) to form undecaprenyl-pyrophosphoryl-MurNAc-(pentapeptide)GlcNAc (lipid intermediate II). This chain is UDP-N-acetylglucosamine--N-acetylmuramyl-(pentapeptide) pyrophosphoryl-undecaprenol N-acetylglucosamine transferase, found in Rippkaea orientalis (strain PCC 8801 / RF-1) (Cyanothece sp. (strain PCC 8801)).